The following is a 64-amino-acid chain: Antimicrobial peptide 1 (64 aa).

Positions 1 to 26 are cleaved as a signal peptide; the sequence is MAKVSSSLLKFAIVLILVLSMSAIIS. 3 disulfide bridges follow: Cys-29-Cys-46, Cys-36-Cys-50, and Cys-45-Cys-61.

The protein belongs to the AMP family.

Its subcellular location is the secreted. Functionally, possesses antifungal and antibacterial activity. The polypeptide is Antimicrobial peptide 1 (Mesembryanthemum crystallinum (Common ice plant)).